The chain runs to 563 residues: Arginine--tRNA ligase (563 aa).

Residues 121–131 (PNIAKPFSIGH) carry the 'HIGH' region motif.

The protein belongs to the class-I aminoacyl-tRNA synthetase family. In terms of assembly, monomer.

It is found in the cytoplasm. It carries out the reaction tRNA(Arg) + L-arginine + ATP = L-arginyl-tRNA(Arg) + AMP + diphosphate. This is Arginine--tRNA ligase from Streptococcus pyogenes serotype M49 (strain NZ131).